Reading from the N-terminus, the 254-residue chain is DNA repair protein RecO (254 aa).

This sequence belongs to the RecO family.

Functionally, involved in DNA repair and RecF pathway recombination. This is DNA repair protein RecO from Rhodopseudomonas palustris (strain BisB18).